We begin with the raw amino-acid sequence, 160 residues long: Cytochrome c-type biogenesis protein CcmE (160 aa).

The Cytoplasmic segment spans residues 1 to 8 (MNPRRKKR). A helical; Signal-anchor for type II membrane protein membrane pass occupies residues 9–29 (LGIILAIFFGISATVGLMVYA). Residues 30 to 160 (LNQNMDLFYT…TTEQKEGNAQ (131 aa)) are Periplasmic-facing. Residues H128 and Y132 each contribute to the heme site.

The protein belongs to the CcmE/CycJ family.

It localises to the cell inner membrane. Its function is as follows. Heme chaperone required for the biogenesis of c-type cytochromes. Transiently binds heme delivered by CcmC and transfers the heme to apo-cytochromes in a process facilitated by CcmF and CcmH. The protein is Cytochrome c-type biogenesis protein CcmE of Vibrio atlanticus (strain LGP32) (Vibrio splendidus (strain Mel32)).